Here is a 1005-residue protein sequence, read N- to C-terminus: Translation initiation factor IF-2 (1005 aa).

Disordered regions lie at residues 54–337 (KYVP…RRPQ) and 368–414 (PKPK…PTSV). A compositionally biased stretch (polar residues) spans 58–73 (SPSTHSMPPTRPTSHS). Pro residues predominate over residues 75-86 (PLPPQPGKPQPK). Residues 146-157 (GSNSPSHSESTP) show a composition bias toward polar residues. 2 stretches are compositionally biased toward low complexity: residues 189–198 (PSPAAMAGRA) and 222–240 (VESA…PRAE). Over residues 258 to 274 (PRSETSEDGARRGEKLV) the composition is skewed to basic and acidic residues. Basic residues predominate over residues 392–401 (GGRKLSRRDR). The 174-residue stretch at 495-668 (RRPPVVTIMG…LLVSEVEDLY (174 aa)) folds into the tr-type G domain. Residues 504–511 (GHVDHGKT) are G1. Position 504 to 511 (504 to 511 (GHVDHGKT)) interacts with GTP. The segment at 529-533 (GITQH) is G2. The tract at residues 554–557 (DTPG) is G3. GTP is bound by residues 554-558 (DTPGH) and 608-611 (NKID). The tract at residues 608 to 611 (NKID) is G4. Residues 644–646 (SAI) form a G5 region.

It belongs to the TRAFAC class translation factor GTPase superfamily. Classic translation factor GTPase family. IF-2 subfamily.

It is found in the cytoplasm. Functionally, one of the essential components for the initiation of protein synthesis. Protects formylmethionyl-tRNA from spontaneous hydrolysis and promotes its binding to the 30S ribosomal subunits. Also involved in the hydrolysis of GTP during the formation of the 70S ribosomal complex. In Cyanothece sp. (strain PCC 7425 / ATCC 29141), this protein is Translation initiation factor IF-2.